A 122-amino-acid chain; its full sequence is Large ribosomal subunit protein bL12 (122 aa).

Belongs to the bacterial ribosomal protein bL12 family. In terms of assembly, homodimer. Part of the ribosomal stalk of the 50S ribosomal subunit. Forms a multimeric L10(L12)X complex, where L10 forms an elongated spine to which 2 to 4 L12 dimers bind in a sequential fashion. Binds GTP-bound translation factors.

Its function is as follows. Forms part of the ribosomal stalk which helps the ribosome interact with GTP-bound translation factors. Is thus essential for accurate translation. In Xanthomonas oryzae pv. oryzae (strain MAFF 311018), this protein is Large ribosomal subunit protein bL12.